Here is a 352-residue protein sequence, read N- to C-terminus: GTPase Obg (352 aa).

Residues 1 to 159 (MQFIDQAEIQ…RMLRLELKLL (159 aa)) enclose the Obg domain. In terms of domain architecture, OBG-type G spans 160 to 330 (AEVGIIGLPN…LMQEIWGLLE (171 aa)). GTP is bound by residues 166 to 173 (GLPNAGKS), 191 to 195 (FTTLV), 213 to 216 (DIPG), 280 to 283 (NKVD), and 311 to 313 (SAV). 2 residues coordinate Mg(2+): S173 and T193.

This sequence belongs to the TRAFAC class OBG-HflX-like GTPase superfamily. OBG GTPase family. In terms of assembly, monomer. Requires Mg(2+) as cofactor.

Its subcellular location is the cytoplasm. Its function is as follows. An essential GTPase which binds GTP, GDP and possibly (p)ppGpp with moderate affinity, with high nucleotide exchange rates and a fairly low GTP hydrolysis rate. Plays a role in control of the cell cycle, stress response, ribosome biogenesis and in those bacteria that undergo differentiation, in morphogenesis control. In Trichodesmium erythraeum (strain IMS101), this protein is GTPase Obg.